A 78-amino-acid polypeptide reads, in one-letter code: Large ribosomal subunit protein bL28 (78 aa).

Belongs to the bacterial ribosomal protein bL28 family.

This Gloeothece citriformis (strain PCC 7424) (Cyanothece sp. (strain PCC 7424)) protein is Large ribosomal subunit protein bL28.